We begin with the raw amino-acid sequence, 152 residues long: Psoriasis susceptibility 1 candidate gene 1 protein (152 aa).

The segment covering 1 to 31 (MTCTDQKSHSQRALGTQTPALQGPQLLNTDP) has biased composition (polar residues). The tract at residues 1-42 (MTCTDQKSHSQRALGTQTPALQGPQLLNTDPSSEETRPPHVN) is disordered.

As to expression, expressed in skin. Also found in heart, placenta, liver, skeletal muscle and pancreas.

In Homo sapiens (Human), this protein is Psoriasis susceptibility 1 candidate gene 1 protein (PSORS1C1).